The sequence spans 52 residues: Conotoxin Cal9.2b (52 aa).

Residues 1–6 (KKGVTL) constitute a propeptide that is removed on maturation. Intrachain disulfides connect Cys14/Cys31, Cys19/Cys41, and Cys21/Cys46.

In terms of tissue distribution, expressed by the venom duct.

It localises to the secreted. In terms of biological role, probable neurotoxin with unknown target. Possibly targets ion channels. This Californiconus californicus (California cone) protein is Conotoxin Cal9.2b.